The chain runs to 79 residues: RNA-binding protein Hfq (79 aa).

In terms of domain architecture, Sm spans 10 to 70; it reads DAFLNHVRKT…ISTIMPAQPI (61 aa).

It belongs to the Hfq family. Homohexamer.

Functionally, RNA chaperone that binds small regulatory RNA (sRNAs) and mRNAs to facilitate mRNA translational regulation in response to envelope stress, environmental stress and changes in metabolite concentrations. Also binds with high specificity to tRNAs. The polypeptide is RNA-binding protein Hfq (Ruegeria pomeroyi (strain ATCC 700808 / DSM 15171 / DSS-3) (Silicibacter pomeroyi)).